Consider the following 324-residue polypeptide: Endochitinase A2 (324 aa).

Residues 1–20 form the signal peptide; the sequence is MSKLRIPILLVLFIVSCCSA. The Chitin-binding type-1 domain maps to 21-61; that stretch reads EQCGTQAGGALCPGGLCCSKFGWCGSTSEYCGDGCQSQCSG. Intrachain disulfides connect Cys23–Cys38, Cys32–Cys44, Cys37–Cys51, and Cys55–Cys59. Glu133 functions as the Proton donor in the catalytic mechanism. Intrachain disulfides connect Cys151/Cys170 and Cys269/Cys301. The propeptide at 310-324 is removed in mature form; that stretch reads SLPLSSILLDTVAAA.

This sequence belongs to the glycosyl hydrolase 19 family. Chitinase class I subfamily.

The enzyme catalyses Random endo-hydrolysis of N-acetyl-beta-D-glucosaminide (1-&gt;4)-beta-linkages in chitin and chitodextrins.. In terms of biological role, defense against chitin-containing fungal pathogens. The polypeptide is Endochitinase A2 (CHI2) (Pisum sativum (Garden pea)).